Reading from the N-terminus, the 179-residue chain is Crossover junction endodeoxyribonuclease RuvC (179 aa).

Residues Asp7, Glu67, and Asp140 contribute to the active site. Positions 7, 67, and 140 each coordinate Mg(2+).

The protein belongs to the RuvC family. As to quaternary structure, homodimer which binds Holliday junction (HJ) DNA. The HJ becomes 2-fold symmetrical on binding to RuvC with unstacked arms; it has a different conformation from HJ DNA in complex with RuvA. In the full resolvosome a probable DNA-RuvA(4)-RuvB(12)-RuvC(2) complex forms which resolves the HJ. The cofactor is Mg(2+).

The protein localises to the cytoplasm. The enzyme catalyses Endonucleolytic cleavage at a junction such as a reciprocal single-stranded crossover between two homologous DNA duplexes (Holliday junction).. In terms of biological role, the RuvA-RuvB-RuvC complex processes Holliday junction (HJ) DNA during genetic recombination and DNA repair. Endonuclease that resolves HJ intermediates. Cleaves cruciform DNA by making single-stranded nicks across the HJ at symmetrical positions within the homologous arms, yielding a 5'-phosphate and a 3'-hydroxyl group; requires a central core of homology in the junction. The consensus cleavage sequence is 5'-(A/T)TT(C/G)-3'. Cleavage occurs on the 3'-side of the TT dinucleotide at the point of strand exchange. HJ branch migration catalyzed by RuvA-RuvB allows RuvC to scan DNA until it finds its consensus sequence, where it cleaves and resolves the cruciform DNA. This Salinibacter ruber (strain DSM 13855 / M31) protein is Crossover junction endodeoxyribonuclease RuvC.